Consider the following 511-residue polypeptide: 2-isopropylmalate synthase (511 aa).

The segment covering M1–E16 has biased composition (basic and acidic residues). The tract at residues M1–M23 is disordered. The Pyruvate carboxyltransferase domain occupies I5 to T268. D14, H203, H205, and N239 together coordinate Mn(2+). The tract at residues A392–K511 is regulatory domain.

It belongs to the alpha-IPM synthase/homocitrate synthase family. LeuA type 1 subfamily. As to quaternary structure, homodimer. It depends on Mn(2+) as a cofactor.

It is found in the cytoplasm. The enzyme catalyses 3-methyl-2-oxobutanoate + acetyl-CoA + H2O = (2S)-2-isopropylmalate + CoA + H(+). The protein operates within amino-acid biosynthesis; L-leucine biosynthesis; L-leucine from 3-methyl-2-oxobutanoate: step 1/4. Functionally, catalyzes the condensation of the acetyl group of acetyl-CoA with 3-methyl-2-oxobutanoate (2-ketoisovalerate) to form 3-carboxy-3-hydroxy-4-methylpentanoate (2-isopropylmalate). In Olsenella uli (strain ATCC 49627 / DSM 7084 / CCUG 31166 / CIP 109912 / JCM 12494 / LMG 11480 / NCIMB 702895 / VPI D76D-27C) (Lactobacillus uli), this protein is 2-isopropylmalate synthase.